The following is a 477-amino-acid chain: Histidine--tRNA ligase (477 aa).

This sequence belongs to the class-II aminoacyl-tRNA synthetase family. In terms of assembly, homodimer.

It is found in the cytoplasm. The enzyme catalyses tRNA(His) + L-histidine + ATP = L-histidyl-tRNA(His) + AMP + diphosphate + H(+). The sequence is that of Histidine--tRNA ligase from Xanthomonas campestris pv. campestris (strain 8004).